We begin with the raw amino-acid sequence, 65 residues long: Small ribosomal subunit protein bS21 (65 aa).

It belongs to the bacterial ribosomal protein bS21 family.

This is Small ribosomal subunit protein bS21 from Flavobacterium psychrophilum (strain ATCC 49511 / DSM 21280 / CIP 103535 / JIP02/86).